The chain runs to 696 residues: MTDLSQVPSPYDESKFVTFDGSPFQLYQPYPPAGDQPEAIRQLVEGIGDGLSYQTLLGVTGSGKTYTMANVIAQAGRPAIVFAPNKTLAAQLYSEFREFFPRNAVEYFVSYYDYYQPEAYVPQRDLFIEKDSSVNEHIEQMRLSATKSLLERRDVVIVATVSAIYGIGNPTEYHQMILTLRTGDKISQRDVIARLIAMQYTRNETDFQRGTFRVRGDTVDIFPAEHAEMAVRLELFDDEVDSLQLFDPLTGRVRQKILRFTVYPSSHYVTPRETVLRAIGTIKAELRERLDFFYQENKLVEAQRLEQRTRFDLEMLQELGFCKGIENYSRHLSGAQPGEPPPTLVDYLPSDALMFLDESHVLIGQLNGMYNGDRARKETLSAYGFRLPSALDNRPLKFAEFEGKMRQVVFVSATPADYEKQRAGDEVVEQVVRPTGLVDPIIHVRPATTQVDDLLSEIHERVKAGERVLVTTLTKRMAEQLTEFLSENGVKVRYLHSDIDTVERVEIIRDLRLGTFDVLVGINLLREGLDIPEVSLVAILDADKEGFLRAERSLIQTIGRAARNVNGTAILYGDRITESMKKAIGETERRRAKQIAHNEAHGITPRGVVKRIKDIIDGVYNVDDARAELKAAQDAAKYEDMSEKQVGKEIKRLEKQMLDHAKNLEFEKAAAVRDQLAKLKSQVFGASGEDHIVPAA.

The Helicase ATP-binding domain maps to 45–434 (EGIGDGLSYQ…DEVVEQVVRP (390 aa)). 58 to 65 (GVTGSGKT) serves as a coordination point for ATP. The short motif at 111–134 (YYDYYQPEAYVPQRDLFIEKDSSV) is the Beta-hairpin element. The Helicase C-terminal domain occupies 450 to 616 (QVDDLLSEIH…GVVKRIKDII (167 aa)). Positions 647 to 682 (GKEIKRLEKQMLDHAKNLEFEKAAAVRDQLAKLKSQ) constitute a UVR domain.

Belongs to the UvrB family. As to quaternary structure, forms a heterotetramer with UvrA during the search for lesions. Interacts with UvrC in an incision complex.

The protein localises to the cytoplasm. In terms of biological role, the UvrABC repair system catalyzes the recognition and processing of DNA lesions. A damage recognition complex composed of 2 UvrA and 2 UvrB subunits scans DNA for abnormalities. Upon binding of the UvrA(2)B(2) complex to a putative damaged site, the DNA wraps around one UvrB monomer. DNA wrap is dependent on ATP binding by UvrB and probably causes local melting of the DNA helix, facilitating insertion of UvrB beta-hairpin between the DNA strands. Then UvrB probes one DNA strand for the presence of a lesion. If a lesion is found the UvrA subunits dissociate and the UvrB-DNA preincision complex is formed. This complex is subsequently bound by UvrC and the second UvrB is released. If no lesion is found, the DNA wraps around the other UvrB subunit that will check the other stand for damage. The protein is UvrABC system protein B of Ralstonia nicotianae (strain ATCC BAA-1114 / GMI1000) (Ralstonia solanacearum).